The chain runs to 182 residues: Bifunctional protein PyrR (182 aa).

Positions 99–111 (IVLVDDVLFTGRT) match the PRPP-binding motif.

It belongs to the purine/pyrimidine phosphoribosyltransferase family. PyrR subfamily. Homodimer and homohexamer; in equilibrium.

The catalysed reaction is UMP + diphosphate = 5-phospho-alpha-D-ribose 1-diphosphate + uracil. Regulates transcriptional attenuation of the pyrimidine nucleotide (pyr) operon by binding in a uridine-dependent manner to specific sites on pyr mRNA. This disrupts an antiterminator hairpin in the RNA and favors formation of a downstream transcription terminator, leading to a reduced expression of downstream genes. In terms of biological role, also displays a weak uracil phosphoribosyltransferase activity which is not physiologically significant. In Caldicellulosiruptor bescii (strain ATCC BAA-1888 / DSM 6725 / KCTC 15123 / Z-1320) (Anaerocellum thermophilum), this protein is Bifunctional protein PyrR.